The chain runs to 340 residues: Anthranilate phosphoribosyltransferase (340 aa).

5-phospho-alpha-D-ribose 1-diphosphate contacts are provided by residues glycine 83, 86 to 87 (GD), threonine 91, 93 to 96 (NVST), 111 to 119 (KHGNRSVSS), and serine 123. Glycine 83 is an anthranilate binding site. Position 95 (serine 95) interacts with Mg(2+). Position 114 (asparagine 114) interacts with anthranilate. Arginine 169 is an anthranilate binding site. Mg(2+) contacts are provided by aspartate 228 and glutamate 229.

It belongs to the anthranilate phosphoribosyltransferase family. As to quaternary structure, homodimer. Mg(2+) is required as a cofactor.

The enzyme catalyses N-(5-phospho-beta-D-ribosyl)anthranilate + diphosphate = 5-phospho-alpha-D-ribose 1-diphosphate + anthranilate. The protein operates within amino-acid biosynthesis; L-tryptophan biosynthesis; L-tryptophan from chorismate: step 2/5. Its function is as follows. Catalyzes the transfer of the phosphoribosyl group of 5-phosphorylribose-1-pyrophosphate (PRPP) to anthranilate to yield N-(5'-phosphoribosyl)-anthranilate (PRA). This is Anthranilate phosphoribosyltransferase from Aquifex aeolicus (strain VF5).